The primary structure comprises 511 residues: Maturase K (511 aa).

It belongs to the intron maturase 2 family. MatK subfamily.

Its subcellular location is the plastid. The protein localises to the chloroplast. Usually encoded in the trnK tRNA gene intron. Probably assists in splicing its own and other chloroplast group II introns. This is Maturase K from Hordeum jubatum (Foxtail barley).